The primary structure comprises 415 residues: Enolase (415 aa).

A (2R)-2-phosphoglycerate-binding site is contributed by Gln-161. Catalysis depends on Glu-203, which acts as the Proton donor. Positions 240, 281, and 308 each coordinate Mg(2+). Lys-333, Arg-362, Ser-363, and Lys-384 together coordinate (2R)-2-phosphoglycerate. Lys-333 functions as the Proton acceptor in the catalytic mechanism.

Belongs to the enolase family. Requires Mg(2+) as cofactor.

It is found in the cytoplasm. Its subcellular location is the secreted. The protein resides in the cell surface. It catalyses the reaction (2R)-2-phosphoglycerate = phosphoenolpyruvate + H2O. It participates in carbohydrate degradation; glycolysis; pyruvate from D-glyceraldehyde 3-phosphate: step 4/5. Catalyzes the reversible conversion of 2-phosphoglycerate (2-PG) into phosphoenolpyruvate (PEP). It is essential for the degradation of carbohydrates via glycolysis. The protein is Enolase of Campylobacter hominis (strain ATCC BAA-381 / DSM 21671 / CCUG 45161 / LMG 19568 / NCTC 13146 / CH001A).